The chain runs to 126 residues: Holo-[acyl-carrier-protein] synthase (126 aa).

Residues Asp9 and Glu57 each contribute to the Mg(2+) site.

It belongs to the P-Pant transferase superfamily. AcpS family. Mg(2+) is required as a cofactor.

Its subcellular location is the cytoplasm. The enzyme catalyses apo-[ACP] + CoA = holo-[ACP] + adenosine 3',5'-bisphosphate + H(+). Functionally, transfers the 4'-phosphopantetheine moiety from coenzyme A to a Ser of acyl-carrier-protein. The sequence is that of Holo-[acyl-carrier-protein] synthase from Pseudoalteromonas atlantica (strain T6c / ATCC BAA-1087).